A 166-amino-acid chain; its full sequence is MIRGRVWKFGDNISTDHIAPGRYFHLRNNLEELAKHVLEDAMEDFAKKVQKGDIIVAGKNFGLGSSREHAARIIKIAGVSCIVAKSFARIFYRNAINVGLPVIELKEVDEINQGDELEIDLENGVLKNLTTGKEYRFTPIPKFLLEILKEDGIVNYLKKHGSFPKV.

It belongs to the LeuD family. LeuD type 2 subfamily. In terms of assembly, heterodimer of LeuC and LeuD.

The catalysed reaction is (2R,3S)-3-isopropylmalate = (2S)-2-isopropylmalate. It functions in the pathway amino-acid biosynthesis; L-leucine biosynthesis; L-leucine from 3-methyl-2-oxobutanoate: step 2/4. Its function is as follows. Catalyzes the isomerization between 2-isopropylmalate and 3-isopropylmalate, via the formation of 2-isopropylmaleate. The sequence is that of 3-isopropylmalate dehydratase small subunit 1 (leuD1) from Thermotoga maritima (strain ATCC 43589 / DSM 3109 / JCM 10099 / NBRC 100826 / MSB8).